The primary structure comprises 420 residues: Glucose-1-phosphate adenylyltransferase (420 aa).

Alpha-D-glucose 1-phosphate contacts are provided by residues Tyr108, Gly173, 188 to 189, and Ser206; that span reads EK.

This sequence belongs to the bacterial/plant glucose-1-phosphate adenylyltransferase family. Homotetramer.

The catalysed reaction is alpha-D-glucose 1-phosphate + ATP + H(+) = ADP-alpha-D-glucose + diphosphate. The protein operates within glycan biosynthesis; glycogen biosynthesis. Its function is as follows. Involved in the biosynthesis of ADP-glucose, a building block required for the elongation reactions to produce glycogen. Catalyzes the reaction between ATP and alpha-D-glucose 1-phosphate (G1P) to produce pyrophosphate and ADP-Glc. The polypeptide is Glucose-1-phosphate adenylyltransferase (Paraburkholderia phytofirmans (strain DSM 17436 / LMG 22146 / PsJN) (Burkholderia phytofirmans)).